The primary structure comprises 156 residues: Small ribosomal subunit protein uS7 (156 aa).

It belongs to the universal ribosomal protein uS7 family. Part of the 30S ribosomal subunit. Contacts proteins S9 and S11.

One of the primary rRNA binding proteins, it binds directly to 16S rRNA where it nucleates assembly of the head domain of the 30S subunit. Is located at the subunit interface close to the decoding center, probably blocks exit of the E-site tRNA. This chain is Small ribosomal subunit protein uS7, found in Desulfatibacillum aliphaticivorans.